The following is an 88-amino-acid chain: DNA-directed RNA polymerase subunit omega (88 aa).

The protein belongs to the RNA polymerase subunit omega family. In terms of assembly, the RNAP catalytic core consists of 2 alpha, 1 beta, 1 beta' and 1 omega subunit. When a sigma factor is associated with the core the holoenzyme is formed, which can initiate transcription.

It catalyses the reaction RNA(n) + a ribonucleoside 5'-triphosphate = RNA(n+1) + diphosphate. Its function is as follows. Promotes RNA polymerase assembly. Latches the N- and C-terminal regions of the beta' subunit thereby facilitating its interaction with the beta and alpha subunits. This Salinispora arenicola (strain CNS-205) protein is DNA-directed RNA polymerase subunit omega.